We begin with the raw amino-acid sequence, 87 residues long: Histone H1.C6/H1.C9 (87 aa).

The interval 1 to 87 is disordered; sequence MSDAAVPPKK…KKAVKKAPKK (87 aa). Basic residues predominate over residues 11–87; that stretch reads ASPKKASPKK…KKAVKKAPKK (77 aa).

The protein localises to the nucleus. Its subcellular location is the chromosome. In Trypanosoma cruzi, this protein is Histone H1.C6/H1.C9.